The primary structure comprises 331 residues: Polyprenyl transferase mpaA' (331 aa).

The next 8 helical transmembrane spans lie at M27 to L47, I56 to A76, L127 to L147, V159 to W179, G190 to F210, L240 to I260, W264 to F284, and I295 to G315.

The protein belongs to the UbiA prenyltransferase family. Mg(2+) serves as cofactor.

It localises to the golgi apparatus membrane. The enzyme catalyses 5,7-dihydroxy-4-methylphthalide + (2E,6E)-farnesyl diphosphate = 4-farnesyl-3,5-dihydroxy-6-methylphthalide + diphosphate. It participates in secondary metabolite biosynthesis; terpenoid biosynthesis. Polyprenyl transferase; part of the gene cluster that mediates the biosynthesis of mycophenolic acid (MPA), the first isolated antibiotic natural product in the world obtained from a culture of Penicillium brevicompactum in 1893. MpaA' is a Golgi apparatus-associated enzyme that catalyzes the prenylation of 5,7-dihydroxy-4,6-dimethylphthalide (DHMP) to yield farnesyl-DHMP (FDHMP). The first step of the pathway is the synthesis of 5-methylorsellinic acid (5MOA) by the cytosolic polyketide synthase mpaC. 5MOA is then converted to the phthalide compound 5,7-dihydroxy-4,6-dimethylphthalide (DHMP) by the endoplasmic reticulum-bound cytochrome P450 monooxygenase mpaDE. MpaDE first catalyzes hydroxylation of 5-MOA to 4,6-dihydroxy-2-(hydroxymethyl)-3-methylbenzoic acid (DHMB). MpaDE then acts as a lactone synthase that catalyzes the ring closure to convert DHMB into DHMP. The next step is the prenylation of DHMP by the Golgi apparatus-associated prenyltransferase mpaA to yield farnesyl-DHMP (FDHMP). The ER-bound oxygenase mpaB then mediates the oxidative cleavage the C19-C20 double bond in FDHMP to yield FDHMP-3C via a mycophenolic aldehyde intermediate. The O-methyltransferase mpaG catalyzes the methylation of FDHMP-3C to yield MFDHMP-3C. After the cytosolic methylation of FDHMP-3C, MFDHMP-3C enters into peroxisomes probably via free diffusion due to its low molecular weight. Upon a peroxisomal CoA ligation reaction, catalyzed by a beta-oxidation component enzyme acyl-CoA ligase ACL891, MFDHMP-3C-CoA would then be restricted to peroxisomes for the following beta-oxidation pathway steps. The peroxisomal beta-oxidation machinery than converts MFDHMP-3C-CoA into MPA_CoA, via a beta-oxidation chain-shortening process. Finally mpaH acts as a peroxisomal acyl-CoA hydrolase with high substrate specificity toward MPA-CoA to release the final product MPA. The chain is Polyprenyl transferase mpaA' from Penicillium brevicompactum.